The following is a 95-amino-acid chain: Co-chaperonin GroES (95 aa).

Belongs to the GroES chaperonin family. As to quaternary structure, heptamer of 7 subunits arranged in a ring. Interacts with the chaperonin GroEL.

Its subcellular location is the cytoplasm. Its function is as follows. Together with the chaperonin GroEL, plays an essential role in assisting protein folding. The GroEL-GroES system forms a nano-cage that allows encapsulation of the non-native substrate proteins and provides a physical environment optimized to promote and accelerate protein folding. GroES binds to the apical surface of the GroEL ring, thereby capping the opening of the GroEL channel. This is Co-chaperonin GroES from Pelobacter propionicus (strain DSM 2379 / NBRC 103807 / OttBd1).